The sequence spans 862 residues: Kinesin-like protein KIN-7J (862 aa).

The Kinesin motor domain maps to 9–331 (RIVVSVRLRP…LLFANCAKDV (323 aa)). 95–102 (GQTSSGKT) provides a ligand contact to ATP. Residues 340–415 (VMSDKALVKH…NFRKVASDGD (76 aa)) adopt a coiled-coil conformation. Basic and acidic residues-rich tracts occupy residues 475–499 (EEHE…KEVQ) and 518–531 (PEKK…KHSE). Disordered regions lie at residues 475–532 (EEHE…HSES) and 596–643 (DDSA…STCN). The segment covering 598-610 (SASTTPSSETFRY) has biased composition (polar residues). Over residues 613 to 629 (RRPEKVRKSLSPDEIAD) the composition is skewed to basic and acidic residues.

The protein belongs to the TRAFAC class myosin-kinesin ATPase superfamily. Kinesin family. KIN-7 subfamily.

The sequence is that of Kinesin-like protein KIN-7J from Oryza sativa subsp. japonica (Rice).